The following is a 508-amino-acid chain: Light-independent protochlorophyllide reductase subunit B (508 aa).

Position 36 (aspartate 36) interacts with [4Fe-4S] cluster. Catalysis depends on aspartate 294, which acts as the Proton donor. 429-430 serves as a coordination point for substrate; it reads GM.

This sequence belongs to the ChlB/BchB/BchZ family. As to quaternary structure, protochlorophyllide reductase is composed of three subunits; ChlL, ChlN and ChlB. Forms a heterotetramer of two ChlB and two ChlN subunits. [4Fe-4S] cluster serves as cofactor.

The catalysed reaction is chlorophyllide a + oxidized 2[4Fe-4S]-[ferredoxin] + 2 ADP + 2 phosphate = protochlorophyllide a + reduced 2[4Fe-4S]-[ferredoxin] + 2 ATP + 2 H2O. It participates in porphyrin-containing compound metabolism; chlorophyll biosynthesis (light-independent). Its function is as follows. Component of the dark-operative protochlorophyllide reductase (DPOR) that uses Mg-ATP and reduced ferredoxin to reduce ring D of protochlorophyllide (Pchlide) to form chlorophyllide a (Chlide). This reaction is light-independent. The NB-protein (ChlN-ChlB) is the catalytic component of the complex. This Synechococcus elongatus (strain ATCC 33912 / PCC 7942 / FACHB-805) (Anacystis nidulans R2) protein is Light-independent protochlorophyllide reductase subunit B.